The chain runs to 325 residues: GTP 3',8-cyclase (325 aa).

Residues 10 to 229 form the Radical SAM core domain; it reads GYGRRINYLR…PSLEKIKSED (220 aa). Residue R19 coordinates GTP. [4Fe-4S] cluster-binding residues include C26 and C30. Y32 serves as a coordination point for S-adenosyl-L-methionine. Residue C33 participates in [4Fe-4S] cluster binding. R69 contacts GTP. Residue G73 participates in S-adenosyl-L-methionine binding. Residue T100 coordinates GTP. An S-adenosyl-L-methionine-binding site is contributed by S124. Residue K161 participates in GTP binding. Position 195 (M195) interacts with S-adenosyl-L-methionine. C257 and C260 together coordinate [4Fe-4S] cluster. 262 to 264 contributes to the GTP binding site; the sequence is RLR. C274 lines the [4Fe-4S] cluster pocket.

Belongs to the radical SAM superfamily. MoaA family. In terms of assembly, monomer and homodimer. The cofactor is [4Fe-4S] cluster.

It catalyses the reaction GTP + AH2 + S-adenosyl-L-methionine = (8S)-3',8-cyclo-7,8-dihydroguanosine 5'-triphosphate + 5'-deoxyadenosine + L-methionine + A + H(+). It participates in cofactor biosynthesis; molybdopterin biosynthesis. Its function is as follows. Catalyzes the cyclization of GTP to (8S)-3',8-cyclo-7,8-dihydroguanosine 5'-triphosphate. The chain is GTP 3',8-cyclase from Peptoclostridium acidaminophilum (Eubacterium acidaminophilum).